The primary structure comprises 217 residues: 3,4-dihydroxy-2-butanone 4-phosphate synthase (217 aa).

D-ribulose 5-phosphate contacts are provided by residues 37–38, aspartate 42, 150–154, and glutamate 174; these read RE and RGGHT. A Mg(2+)-binding site is contributed by glutamate 38. Position 153 (histidine 153) interacts with Mg(2+).

This sequence belongs to the DHBP synthase family. In terms of assembly, homodimer. It depends on Mg(2+) as a cofactor. Mn(2+) serves as cofactor.

The enzyme catalyses D-ribulose 5-phosphate = (2S)-2-hydroxy-3-oxobutyl phosphate + formate + H(+). It functions in the pathway cofactor biosynthesis; riboflavin biosynthesis; 2-hydroxy-3-oxobutyl phosphate from D-ribulose 5-phosphate: step 1/1. Its function is as follows. Catalyzes the conversion of D-ribulose 5-phosphate to formate and 3,4-dihydroxy-2-butanone 4-phosphate. The sequence is that of 3,4-dihydroxy-2-butanone 4-phosphate synthase from Pectobacterium carotovorum subsp. carotovorum (strain PC1).